The following is a 548-amino-acid chain: 5-epi-aristolochene synthase 1 (548 aa).

Residues Asp-301, Asp-305, Asp-444, Thr-448, and Glu-452 each contribute to the Mg(2+) site. Positions 301–305 (DDTFD) match the DDXXD motif motif.

It belongs to the terpene synthase family. As to quaternary structure, monomer. Mg(2+) is required as a cofactor. As to expression, expressed in roots, but not in shoots.

Its subcellular location is the cytoplasm. It catalyses the reaction (2E,6E)-farnesyl diphosphate = (+)-5-epi-aristolochene + diphosphate. It functions in the pathway secondary metabolite biosynthesis; terpenoid biosynthesis. Functionally, catalyzes the cyclization of trans,trans-farnesyl diphosphate (FPP) to the bicyclic intermediate 5-epi-aristolochene, initial step in the conversion of FPP to the sesquiterpenoid antifungal phytoalexin capsidiol. Produces germacrene A as an enzyme-bound intermediate that is not released by the enzyme, but is further cyclized to produce the bicyclic 5-epi-aristolochene. The sequence is that of 5-epi-aristolochene synthase 1 (EAS) from Nicotiana attenuata (Coyote tobacco).